The following is a 196-amino-acid chain: Peroxisome assembly protein 22 (196 aa).

The helical transmembrane segment at 15–37 (LWIAALVAASIVTISYKVYSSYI) threads the bilayer.

The protein belongs to the peroxin-22 family.

It is found in the peroxisome membrane. Involved in peroxisome biogenesis. The protein is Peroxisome assembly protein 22 (PEX22) of Debaryomyces hansenii (strain ATCC 36239 / CBS 767 / BCRC 21394 / JCM 1990 / NBRC 0083 / IGC 2968) (Yeast).